A 366-amino-acid polypeptide reads, in one-letter code: MSASLKHTPLAETHLAAGARMVDFGGWEMPLAYGSQLEEHHAVRQDAGMFDVSHMLNADITGPDATAFLRYLVANDVARLNTPGKALYSCMLNPQGGVIDDLIIYYFAPDSWRVVVNAGTAEKDMAWMARVAAAGNFDVVITPRRDLAMIAVQGPNARAKVWAARPAWQPASEGLGPFTAAILPEDTLVARTGYTGEDGFEIVLPASAAVALWQDLVAQGVRPCGLGARDTLRLEAGMNLYGQDMDELVQPNQAGLSWTVSLKDAERRFIGRDALEQFATPCAFLGLKLSERGVMRAHMAVRTPQGMGLTTSGTMSPTLGVSIAFARLPLDVQPGSAVEVDIRGKWVPALVCKLPFVRNGKAVEHS.

The protein belongs to the GcvT family. The glycine cleavage system is composed of four proteins: P, T, L and H.

It catalyses the reaction N(6)-[(R)-S(8)-aminomethyldihydrolipoyl]-L-lysyl-[protein] + (6S)-5,6,7,8-tetrahydrofolate = N(6)-[(R)-dihydrolipoyl]-L-lysyl-[protein] + (6R)-5,10-methylene-5,6,7,8-tetrahydrofolate + NH4(+). Its function is as follows. The glycine cleavage system catalyzes the degradation of glycine. The polypeptide is Aminomethyltransferase (Bordetella avium (strain 197N)).